The following is a 518-amino-acid chain: Glutamate--cysteine ligase (518 aa).

Belongs to the glutamate--cysteine ligase type 1 family. Type 1 subfamily.

It catalyses the reaction L-cysteine + L-glutamate + ATP = gamma-L-glutamyl-L-cysteine + ADP + phosphate + H(+). It participates in sulfur metabolism; glutathione biosynthesis; glutathione from L-cysteine and L-glutamate: step 1/2. The protein is Glutamate--cysteine ligase of Buchnera aphidicola subsp. Acyrthosiphon pisum (strain 5A).